We begin with the raw amino-acid sequence, 88 residues long: Small ribosomal subunit protein uS15 (88 aa).

It belongs to the universal ribosomal protein uS15 family. In terms of assembly, part of the 30S ribosomal subunit. Forms a bridge to the 50S subunit in the 70S ribosome, contacting the 23S rRNA.

Functionally, one of the primary rRNA binding proteins, it binds directly to 16S rRNA where it helps nucleate assembly of the platform of the 30S subunit by binding and bridging several RNA helices of the 16S rRNA. Its function is as follows. Forms an intersubunit bridge (bridge B4) with the 23S rRNA of the 50S subunit in the ribosome. The chain is Small ribosomal subunit protein uS15 from Desulfitobacterium hafniense (strain Y51).